The primary structure comprises 369 residues: Ribonuclease 3 (369 aa).

Residues isoleucine 6–aspartate 142 enclose the RNase III domain. Mg(2+) is bound at residue glutamate 46. Residue aspartate 50 is part of the active site. Positions 128 and 131 each coordinate Mg(2+). The active site involves glutamate 131. The 70-residue stretch at asparagine 272–lysine 341 folds into the DRBM domain.

This sequence belongs to the ribonuclease III family. Homodimer. It depends on Mg(2+) as a cofactor.

It localises to the cytoplasm. It carries out the reaction Endonucleolytic cleavage to 5'-phosphomonoester.. Digests double-stranded RNA. Involved in the processing of primary rRNA transcript to yield the immediate precursors to the large and small rRNAs (23S and 16S). Processes some mRNAs, and tRNAs when they are encoded in the rRNA operon. Processes pre-crRNA and tracrRNA of type II CRISPR loci if present in the organism. This is Ribonuclease 3 (rnc) from Treponema succinifaciens (strain ATCC 33096 / DSM 2489 / 6091).